The primary structure comprises 361 residues: MIPKEEIMGIFEKYNKDEVTIVTVGSHTSLHILKGAKLEGFSTAVITTRDRDIPYKRFGVADKFIYVDKFSDISKEEIQQQLRDMNAIIVPHGSFIAYCGLDNVEDTFKVPMFGNRAILRWEAERDLEGQLLGGSGLRIPKKYGGPDDIDGPVMVKFPGARGGRGYFPCSTVEEFWRKIGEFKAKGILTEDDVKKAHIEEYVVGANYCIHYFYSPLKDQVELMGIDRRYESSIDGLVRVPAKDQLELSIDPSYVITGNFPVVIRESLLPQVFDMGDKLATKAKELVKPGMLGPFCLQSLCNENLELVVFEMSARVDGGTNTFMNGSPYSCLYTGEPLSMGQRIAKEIKLALELKMIDKVIS.

Residues histidine 27 and serine 94 each coordinate 5-amino-1-(5-phospho-beta-D-ribosyl)imidazole-4-carboxamide. An ATP-grasp domain is found at 116–348; the sequence is RAILRWEAER…MGQRIAKEIK (233 aa). ATP-binding positions include 146-208 and glutamate 230; that span reads PDDI…ANYC. Asparagine 258 contacts 5-amino-1-(5-phospho-beta-D-ribosyl)imidazole-4-carboxamide. Mg(2+)-binding residues include glutamine 297 and glutamate 310.

This sequence belongs to the phosphohexose mutase family. Requires Mg(2+) as cofactor. It depends on Mn(2+) as a cofactor.

It catalyses the reaction 5-amino-1-(5-phospho-beta-D-ribosyl)imidazole-4-carboxamide + formate + ATP = 5-formamido-1-(5-phospho-D-ribosyl)imidazole-4-carboxamide + ADP + phosphate. The protein operates within purine metabolism; IMP biosynthesis via de novo pathway; 5-formamido-1-(5-phospho-D-ribosyl)imidazole-4-carboxamide from 5-amino-1-(5-phospho-D-ribosyl)imidazole-4-carboxamide (formate route): step 1/1. Functionally, catalyzes the ATP- and formate-dependent formylation of 5-aminoimidazole-4-carboxamide-1-beta-d-ribofuranosyl 5'-monophosphate (AICAR) to 5-formaminoimidazole-4-carboxamide-1-beta-d-ribofuranosyl 5'-monophosphate (FAICAR) in the absence of folates. The chain is 5-formaminoimidazole-4-carboxamide-1-(beta)-D-ribofuranosyl 5'-monophosphate synthetase from Methanococcus maripaludis (strain C6 / ATCC BAA-1332).